Here is a 600-residue protein sequence, read N- to C-terminus: DNA polymerase alpha subunit B (600 aa).

Residues 107–165 are disordered; sequence ETLLSSYTTPSKGPLKRVSSTPETPLTKRSVAARSPRQLLSPSSFSPSATPSQKYTSRT. Ser-126 carries the post-translational modification Phosphoserine. Thr-127 and Thr-130 each carry phosphothreonine. A compositionally biased stretch (low complexity) spans 139-159; it reads ARSPRQLLSPSSFSPSATPSQ. Phosphoserine is present on residues Ser-141, Ser-147, Ser-152, and Ser-154.

This sequence belongs to the DNA polymerase alpha subunit B family. Component of the alpha DNA polymerase complex (also known as the alpha DNA polymerase-primase complex) consisting of four subunits: the catalytic subunit POLA1, the regulatory subunit POLA2, and the primase complex subunits PRIM1 and PRIM2 respectively. Within the complex, POLA1 directly interacts with PRIM2. Phosphorylated in a cell cycle-dependent manner, in G2/M phase.

Its subcellular location is the nucleus. Functionally, accessory subunit of the DNA polymerase alpha complex (also known as the alpha DNA polymerase-primase complex) which plays an essential role in the initiation of DNA synthesis. During the S phase of the cell cycle, the DNA polymerase alpha complex (composed of a catalytic subunit POLA1, an accessory subunit POLA2 and two primase subunits, the catalytic subunit PRIM1 and the regulatory subunit PRIM2) is recruited to DNA at the replicative forks via direct interactions with MCM10 and WDHD1. The primase subunit of the polymerase alpha complex initiates DNA synthesis by oligomerising short RNA primers on both leading and lagging strands. These primers are initially extended by the polymerase alpha catalytic subunit and subsequently transferred to polymerase delta and polymerase epsilon for processive synthesis on the lagging and leading strand, respectively. The chain is DNA polymerase alpha subunit B (Pola2) from Mus musculus (Mouse).